Consider the following 464-residue polypeptide: Soluble pyridine nucleotide transhydrogenase (464 aa).

An FAD-binding site is contributed by 35 to 44; that stretch reads DSRRQVGGNC.

Belongs to the class-I pyridine nucleotide-disulfide oxidoreductase family. FAD serves as cofactor.

It is found in the cytoplasm. The catalysed reaction is NAD(+) + NADPH = NADH + NADP(+). In terms of biological role, conversion of NADPH, generated by peripheral catabolic pathways, to NADH, which can enter the respiratory chain for energy generation. The protein is Soluble pyridine nucleotide transhydrogenase of Pseudomonas syringae pv. syringae (strain B728a).